Reading from the N-terminus, the 363-residue chain is Zinc phosphodiesterase ELAC protein 1 (363 aa).

Zn(2+) is bound by residues His-62, His-64, Asp-66, His-67, His-182, Asp-253, and His-313. Asp-66 serves as the catalytic Proton acceptor.

The protein belongs to the RNase Z family. As to quaternary structure, homodimer. Zn(2+) serves as cofactor.

It localises to the cytoplasm. Its subcellular location is the cytosol. The protein resides in the nucleus. The catalysed reaction is Endonucleolytic cleavage of RNA, removing extra 3' nucleotides from tRNA precursor, generating 3' termini of tRNAs. A 3'-hydroxy group is left at the tRNA terminus and a 5'-phosphoryl group is left at the trailer molecule.. In terms of biological role, zinc phosphodiesterase, which displays some tRNA 3'-processing endonuclease activity. Specifically involved in tRNA repair: acts downstream of the ribosome-associated quality control (RQC) pathway by removing a 2',3'-cyclic phosphate from tRNAs following cleavage by ANKZF1. tRNAs are then processed by TRNT1. The chain is Zinc phosphodiesterase ELAC protein 1 (ELAC1) from Bos taurus (Bovine).